The following is a 420-amino-acid chain: Gamma-glutamyl phosphate reductase (420 aa).

Belongs to the gamma-glutamyl phosphate reductase family.

Its subcellular location is the cytoplasm. It carries out the reaction L-glutamate 5-semialdehyde + phosphate + NADP(+) = L-glutamyl 5-phosphate + NADPH + H(+). The protein operates within amino-acid biosynthesis; L-proline biosynthesis; L-glutamate 5-semialdehyde from L-glutamate: step 2/2. Functionally, catalyzes the NADPH-dependent reduction of L-glutamate 5-phosphate into L-glutamate 5-semialdehyde and phosphate. The product spontaneously undergoes cyclization to form 1-pyrroline-5-carboxylate. In Streptococcus pneumoniae (strain 70585), this protein is Gamma-glutamyl phosphate reductase.